The following is a 463-amino-acid chain: Glucagon-like peptide 1 receptor (463 aa).

The signal sequence occupies residues 1–21 (MASTPSLLRLALLLLGAVGRA). Residues 22 to 139 (GPRPQGTTVS…KRGERNFPEE (118 aa)) are Extracellular-facing. Intrachain disulfides connect Cys-46–Cys-71, Cys-62–Cys-104, and Cys-85–Cys-126. 3 N-linked (GlcNAc...) asparagine glycosylation sites follow: Asn-63, Asn-82, and Asn-115. Residues 140–164 (QLLSLYIIYTVGYALSFSALVIASA) traverse the membrane as a helical segment. At 165–175 (ILVGFRHLHCT) the chain is on the cytoplasmic side. A helical membrane pass occupies residues 176–201 (RNYIHLNLFASFILRALSVFIKDAAL). The Extracellular segment spans residues 202-227 (KWMYSTAAQQHQWDGLLSYQDSLGCR). An intrachain disulfide couples Cys-226 to Cys-296. The helical transmembrane segment at 228–251 (LVFLLMQYCVAANYYWLLVEGVYL) threads the bilayer. The Cytoplasmic portion of the chain corresponds to 252–265 (YTLLAFSVFSEQRI). A helical membrane pass occupies residues 266–290 (FKLYLSIGWGVPLLFVIPWGIVKYL). Over 291-305 (YEDEGCWTRNSNMNY) the chain is Extracellular. A helical membrane pass occupies residues 306-328 (WLIIRLPILFAIGVNFLIFIRVI). Topologically, residues 329–348 (CIVVSKLKANLMCKTDIKCR) are cytoplasmic. Cys-341 bears the ADP-ribosylcysteine mark. At Arg-348 the chain carries ADP-ribosylarginine. A helical transmembrane segment spans residues 349–370 (LAKSTLTLIPLLGTHEVIFAFV). Residues 352–355 (STLT) form an important for allosteric inhibitor binding region. Residues 371 to 383 (MDEHARGTLRFIK) are Extracellular-facing. Residues 384 to 404 (LFTELSFTSFQGLMVAILYCF) form a helical membrane-spanning segment. Residues 405–463 (VNNEVQMEFRKCWERWRLEHLNIQRDCSMKPLKCPTSSVSSGATVGSSVYAATCQSSYS) lie on the Cytoplasmic side of the membrane.

This sequence belongs to the G-protein coupled receptor 2 family. As to quaternary structure, may form homodimers and heterodimers with GIPR. N-glycosylation enhances cell surface expression and lengthens receptor half-life by preventing degradation in the ER. In terms of tissue distribution, detected in pancreatic islets (at protein level). Detected in pancreatic islets and lungs.

The protein localises to the cell membrane. Its function is as follows. G-protein coupled receptor for glucagon-like peptide 1 (GLP-1). Ligand binding triggers activation of a signaling cascade that leads to the activation of adenylyl cyclase and increased intracellular cAMP levels. Plays a role in regulating insulin secretion in response to GLP-1. This is Glucagon-like peptide 1 receptor (Glp1r) from Mus musculus (Mouse).